A 95-amino-acid polypeptide reads, in one-letter code: Protein TusB (95 aa).

This sequence belongs to the DsrH/TusB family. As to quaternary structure, heterohexamer, formed by a dimer of trimers. The hexameric TusBCD complex contains 2 copies each of TusB, TusC and TusD. The TusBCD complex interacts with TusE.

The protein resides in the cytoplasm. Its function is as follows. Part of a sulfur-relay system required for 2-thiolation of 5-methylaminomethyl-2-thiouridine (mnm(5)s(2)U) at tRNA wobble positions. This is Protein TusB from Salmonella agona (strain SL483).